Consider the following 175-residue polypeptide: NADH-ubiquinone oxidoreductase chain 6 (175 aa).

The next 5 helical transmembrane spans lie at 1 to 21 (MMYT…GVSS), 24 to 44 (SPVY…GIVV), 46 to 66 (FGGS…MMVV), 86 to 106 (IVVL…VVYL), and 149 to 169 (YGCW…FIVI).

The protein belongs to the complex I subunit 6 family. As to quaternary structure, core subunit of respiratory chain NADH dehydrogenase (Complex I) which is composed of 45 different subunits.

It is found in the mitochondrion inner membrane. The catalysed reaction is a ubiquinone + NADH + 5 H(+)(in) = a ubiquinol + NAD(+) + 4 H(+)(out). Core subunit of the mitochondrial membrane respiratory chain NADH dehydrogenase (Complex I) which catalyzes electron transfer from NADH through the respiratory chain, using ubiquinone as an electron acceptor. Essential for the catalytic activity and assembly of complex I. The sequence is that of NADH-ubiquinone oxidoreductase chain 6 (MT-ND6) from Dugong dugon (Dugong).